The chain runs to 469 residues: 3-isopropylmalate dehydratase large subunit (469 aa).

[4Fe-4S] cluster is bound by residues C347, C410, and C413.

It belongs to the aconitase/IPM isomerase family. LeuC type 1 subfamily. In terms of assembly, heterodimer of LeuC and LeuD. It depends on [4Fe-4S] cluster as a cofactor.

It catalyses the reaction (2R,3S)-3-isopropylmalate = (2S)-2-isopropylmalate. Its pathway is amino-acid biosynthesis; L-leucine biosynthesis; L-leucine from 3-methyl-2-oxobutanoate: step 2/4. Its function is as follows. Catalyzes the isomerization between 2-isopropylmalate and 3-isopropylmalate, via the formation of 2-isopropylmaleate. In Burkholderia orbicola (strain MC0-3), this protein is 3-isopropylmalate dehydratase large subunit.